Reading from the N-terminus, the 1375-residue chain is DNA-directed RNA polymerase subunit beta' (1375 aa).

Zn(2+)-binding residues include Cys-70, Cys-72, Cys-85, and Cys-88. Residues Asp-460, Asp-462, and Asp-464 each coordinate Mg(2+). Positions 800, 874, 881, and 884 each coordinate Zn(2+).

The protein belongs to the RNA polymerase beta' chain family. The RNAP catalytic core consists of 2 alpha, 1 beta, 1 beta' and 1 omega subunit. When a sigma factor is associated with the core the holoenzyme is formed, which can initiate transcription. The cofactor is Mg(2+). Zn(2+) is required as a cofactor.

It catalyses the reaction RNA(n) + a ribonucleoside 5'-triphosphate = RNA(n+1) + diphosphate. DNA-dependent RNA polymerase catalyzes the transcription of DNA into RNA using the four ribonucleoside triphosphates as substrates. This chain is DNA-directed RNA polymerase subunit beta', found in Bdellovibrio bacteriovorus (strain ATCC 15356 / DSM 50701 / NCIMB 9529 / HD100).